Consider the following 227-residue polypeptide: Uracil-DNA glycosylase (227 aa).

Catalysis depends on aspartate 64, which acts as the Proton acceptor.

This sequence belongs to the uracil-DNA glycosylase (UDG) superfamily. UNG family.

The protein resides in the cytoplasm. The enzyme catalyses Hydrolyzes single-stranded DNA or mismatched double-stranded DNA and polynucleotides, releasing free uracil.. Its function is as follows. Excises uracil residues from the DNA which can arise as a result of misincorporation of dUMP residues by DNA polymerase or due to deamination of cytosine. This chain is Uracil-DNA glycosylase, found in Sodalis glossinidius (strain morsitans).